We begin with the raw amino-acid sequence, 378 residues long: 3-dehydroquinate synthase (378 aa).

NAD(+) is bound by residues 115 to 119 (GVVGD), 139 to 140 (TS), Lys-152, and Lys-161. Residues Glu-194, His-256, and His-275 each coordinate Zn(2+).

Belongs to the sugar phosphate cyclases superfamily. Dehydroquinate synthase family. It depends on Co(2+) as a cofactor. The cofactor is Zn(2+). NAD(+) serves as cofactor.

The protein resides in the cytoplasm. The catalysed reaction is 7-phospho-2-dehydro-3-deoxy-D-arabino-heptonate = 3-dehydroquinate + phosphate. Its pathway is metabolic intermediate biosynthesis; chorismate biosynthesis; chorismate from D-erythrose 4-phosphate and phosphoenolpyruvate: step 2/7. Catalyzes the conversion of 3-deoxy-D-arabino-heptulosonate 7-phosphate (DAHP) to dehydroquinate (DHQ). In Brucella anthropi (strain ATCC 49188 / DSM 6882 / CCUG 24695 / JCM 21032 / LMG 3331 / NBRC 15819 / NCTC 12168 / Alc 37) (Ochrobactrum anthropi), this protein is 3-dehydroquinate synthase.